Consider the following 161-residue polypeptide: Stress response protein YvgO (161 aa).

A signal peptide spans 1–26 (MKRIRIPMTLALGAALTIAPLSFASA).

The sequence is that of Stress response protein YvgO (yvgO) from Bacillus subtilis (strain 168).